The sequence spans 323 residues: tRNA dimethylallyltransferase (323 aa).

Residue 21-28 (GPTACNKS) participates in ATP binding. 23 to 28 (TACNKS) provides a ligand contact to substrate. Interaction with substrate tRNA regions lie at residues 46-49 (DSAL), 171-175 (QRVLR), and 252-257 (RCVGYR).

This sequence belongs to the IPP transferase family. As to quaternary structure, monomer. Requires Mg(2+) as cofactor.

It carries out the reaction adenosine(37) in tRNA + dimethylallyl diphosphate = N(6)-dimethylallyladenosine(37) in tRNA + diphosphate. Its function is as follows. Catalyzes the transfer of a dimethylallyl group onto the adenine at position 37 in tRNAs that read codons beginning with uridine, leading to the formation of N6-(dimethylallyl)adenosine (i(6)A). The chain is tRNA dimethylallyltransferase from Buchnera aphidicola subsp. Baizongia pistaciae (strain Bp).